Consider the following 120-residue polypeptide: Large ribosomal subunit protein uL18 (120 aa).

This sequence belongs to the universal ribosomal protein uL18 family. In terms of assembly, part of the 50S ribosomal subunit; part of the 5S rRNA/L5/L18/L25 subcomplex. Contacts the 5S and 23S rRNAs.

Functionally, this is one of the proteins that bind and probably mediate the attachment of the 5S RNA into the large ribosomal subunit, where it forms part of the central protuberance. The protein is Large ribosomal subunit protein uL18 of Sinorhizobium medicae (strain WSM419) (Ensifer medicae).